A 72-amino-acid chain; its full sequence is Translation initiation factor IF-1 (72 aa).

An S1-like domain is found at 1-72; sequence MSKDDVIEMQ…TRGRITWRAK (72 aa).

It belongs to the IF-1 family. Component of the 30S ribosomal translation pre-initiation complex which assembles on the 30S ribosome in the order IF-2 and IF-3, IF-1 and N-formylmethionyl-tRNA(fMet); mRNA recruitment can occur at any time during PIC assembly.

It is found in the cytoplasm. Its function is as follows. One of the essential components for the initiation of protein synthesis. Stabilizes the binding of IF-2 and IF-3 on the 30S subunit to which N-formylmethionyl-tRNA(fMet) subsequently binds. Helps modulate mRNA selection, yielding the 30S pre-initiation complex (PIC). Upon addition of the 50S ribosomal subunit IF-1, IF-2 and IF-3 are released leaving the mature 70S translation initiation complex. The sequence is that of Translation initiation factor IF-1 from Clostridium botulinum (strain ATCC 19397 / Type A).